The chain runs to 216 residues: Adenylate kinase (216 aa).

10 to 15 (GAGKGT) serves as a coordination point for ATP. The tract at residues 30-59 (STGDMLRAAVAAGTEVGKRAKAVMDAGKLV) is NMP. Residues Thr31, Arg36, 57-59 (KLV), 85-88 (GFPR), and Gln92 each bind AMP. An LID region spans residues 126–163 (GRYTCANCGAGYHDENLRPKVEGVCDRCGSTHFKRRAD). ATP is bound at residue Arg127. The Zn(2+) site is built by Cys130, Cys133, Cys150, and Cys153. AMP is bound by residues Arg160 and Arg172. An ATP-binding site is contributed by Ala200.

Belongs to the adenylate kinase family. Monomer.

Its subcellular location is the cytoplasm. The enzyme catalyses AMP + ATP = 2 ADP. Its pathway is purine metabolism; AMP biosynthesis via salvage pathway; AMP from ADP: step 1/1. Catalyzes the reversible transfer of the terminal phosphate group between ATP and AMP. Plays an important role in cellular energy homeostasis and in adenine nucleotide metabolism. This is Adenylate kinase from Rhizobium rhizogenes (strain K84 / ATCC BAA-868) (Agrobacterium radiobacter).